We begin with the raw amino-acid sequence, 370 residues long: MPINQKIPTWFAVPAVFAVLSVISYQTLIVPENLEGAKNVLTMAKTIPIPVAGPESIEFDPKGEGPYAAVVDGRILKWRGDDLGWVDFAYTSPHRGNCSKTEVVPTCGRPLGLTFEKKTGDLYICDGYLGLMKVGPEGGLAELIVDEAEGRKVMFANQGDIDEEEDVFYFNDSSDKYHFRDVFFVAVSGERSGRVIRYDKKTKEAKVIMDNLVCNNGLALNKDRSFLITCESGTSLVHRYWIKGPKAGTRDIFAKVPGYPDNIRLTSTGDFWIGLHCKKNLIGRLIVKYKWLGKLVEKTMKLEYVIAFINGFKPHGVAVKISGETGEVLELLEDKEGKTMKYVSEAYERDDGKLWFGSVYWPAVWVLDRK.

A signal peptide spans 1–26; that stretch reads MPINQKIPTWFAVPAVFAVLSVISYQ. N-linked (GlcNAc...) asparagine glycans are attached at residues Asn97 and Asn171.

The protein belongs to the strictosidine synthase family.

It is found in the vacuole. The polypeptide is Protein STRICTOSIDINE SYNTHASE-LIKE 9 (Arabidopsis thaliana (Mouse-ear cress)).